The chain runs to 1196 residues: ATP-dependent helicase/deoxyribonuclease subunit B (1196 aa).

The [4Fe-4S] cluster site is built by C823, C1149, C1152, and C1158.

The protein belongs to the helicase family. AddB/RexB type 2 subfamily. As to quaternary structure, heterodimer of AddA and RexB. The cofactor is Mg(2+). Requires [4Fe-4S] cluster as cofactor.

Functionally, the heterodimer acts as both an ATP-dependent DNA helicase and an ATP-dependent, dual-direction single-stranded exonuclease. Recognizes the chi site generating a DNA molecule suitable for the initiation of homologous recombination. This subunit has 5' -&gt; 3' nuclease activity but not helicase activity. The sequence is that of ATP-dependent helicase/deoxyribonuclease subunit B from Enterococcus faecalis (strain ATCC 700802 / V583).